The sequence spans 377 residues: MSGNSLGKLFCVTSFGESHGPAIGCVVDGCPPGMPISTQEIQVELDRRKPGTSRHVTQRREPDEVEILSGVFEGVTTGTPIALLIRNQDQRSRDYGNIAETFRPGHADYAYWQKYGIRDHRGGGRSSARETAVRVAAGAIARKWLNQQYGVVIRGFMSQLGPIEIPFVDWDEVGRNPFFAPNASIVPALEDYMDELRKSGDSVGARIDVVASGVPVGWGEPVYDRLDADIAYAMMGINAVKGVEIGAGFSSVAQRGTEHSDEMTPEGFLSNNAGGVLGGISTGQDILVSMAVKPTSSIRLDRRSIDKQGDAVVINTHGRHDPCVGIRATPIAEAMLAIVLMDHALRHRAQCGDVSCATPKLARLAPSGVQRVPAPPR.

Residues Arg-48 and Arg-54 each contribute to the NADP(+) site. Residues 125–127 (RSS), 238–239 (NA), Gly-278, 293–297 (KPTSS), and Arg-319 contribute to the FMN site.

The protein belongs to the chorismate synthase family. Homotetramer. It depends on FMNH2 as a cofactor.

The enzyme catalyses 5-O-(1-carboxyvinyl)-3-phosphoshikimate = chorismate + phosphate. The protein operates within metabolic intermediate biosynthesis; chorismate biosynthesis; chorismate from D-erythrose 4-phosphate and phosphoenolpyruvate: step 7/7. Functionally, catalyzes the anti-1,4-elimination of the C-3 phosphate and the C-6 proR hydrogen from 5-enolpyruvylshikimate-3-phosphate (EPSP) to yield chorismate, which is the branch point compound that serves as the starting substrate for the three terminal pathways of aromatic amino acid biosynthesis. This reaction introduces a second double bond into the aromatic ring system. This is Chorismate synthase from Aromatoleum aromaticum (strain DSM 19018 / LMG 30748 / EbN1) (Azoarcus sp. (strain EbN1)).